A 263-amino-acid polypeptide reads, in one-letter code: Endonuclease 8 (263 aa).

The active-site Schiff-base intermediate with DNA is proline 2. Glutamate 3 (proton donor) is an active-site residue. Lysine 53 acts as the Proton donor; for beta-elimination activity in catalysis. Residues glutamine 70, arginine 125, and asparagine 169 each coordinate DNA. The segment at 229–263 (KVFHRDGELCERCGGIIEKTTLSSRPFYWCPGCQH) adopts an FPG-type zinc-finger fold. Arginine 253 functions as the Proton donor; for delta-elimination activity in the catalytic mechanism.

It belongs to the FPG family. It depends on Zn(2+) as a cofactor.

It catalyses the reaction 2'-deoxyribonucleotide-(2'-deoxyribose 5'-phosphate)-2'-deoxyribonucleotide-DNA = a 3'-end 2'-deoxyribonucleotide-(2,3-dehydro-2,3-deoxyribose 5'-phosphate)-DNA + a 5'-end 5'-phospho-2'-deoxyribonucleoside-DNA + H(+). Its function is as follows. Involved in base excision repair of DNA damaged by oxidation or by mutagenic agents. Acts as a DNA glycosylase that recognizes and removes damaged bases. Has a preference for oxidized pyrimidines, such as thymine glycol, 5,6-dihydrouracil and 5,6-dihydrothymine. Has AP (apurinic/apyrimidinic) lyase activity and introduces nicks in the DNA strand. Cleaves the DNA backbone by beta-delta elimination to generate a single-strand break at the site of the removed base with both 3'- and 5'-phosphates. This Shigella boydii serotype 4 (strain Sb227) protein is Endonuclease 8.